A 51-amino-acid polypeptide reads, in one-letter code: uncharacterized protein (51 aa).

This is an uncharacterized protein from Escherichia coli (strain K12).